Reading from the N-terminus, the 55-residue chain is Large ribosomal subunit protein bL33 (55 aa).

It belongs to the bacterial ribosomal protein bL33 family.

The polypeptide is Large ribosomal subunit protein bL33 (Rhizobium etli (strain CIAT 652)).